We begin with the raw amino-acid sequence, 234 residues long: Sugar fermentation stimulation protein homolog (234 aa).

This sequence belongs to the SfsA family.

This chain is Sugar fermentation stimulation protein homolog, found in Shewanella baltica (strain OS195).